The chain runs to 333 residues: Probable siderophore transport system permease protein YfiZ (333 aa).

A signal peptide spans 1 to 31 (MICKKASSKWIVLVCLIFILLTAVCASVVYG). 8 consecutive transmembrane segments (helical) span residues 64–84 (ALVA…MQAL), 94–114 (IFGI…FLHI), 119–139 (ALVW…YAAG), 152–172 (TLAG…LLSV), 193–213 (LDLL…CFFL), 246–266 (VMLA…GIII), 280–300 (WVLP…DIGA), and 303–323 (IIMP…MPVF).

It belongs to the binding-protein-dependent transport system permease family. FecCD subfamily. As to quaternary structure, the complex is composed of one ATP-binding protein (YusV), two transmembrane proteins (YfiZ and YfhA) and a solute-binding protein (YfiY).

The protein resides in the cell membrane. Part of the ABC transporter complex YfiYZ/YfhA/YusV involved in import of the iron-hydroxamate siderophores schizokinen, arthrobactin and corprogen. The sequence is that of Probable siderophore transport system permease protein YfiZ (yfiZ) from Bacillus subtilis (strain 168).